The sequence spans 764 residues: Phenylalanine--tRNA ligase beta subunit (764 aa).

The 111-residue stretch at 38-148 folds into the tRNA-binding domain; it reads CIAPKNVVVG…GELVLGKELH (111 aa). Positions 375–455 constitute a B5 domain; the sequence is LKDCALTFQL…RFVGIDNLVS (81 aa). Mg(2+)-binding residues include D433, D439, E442, and E443. The FDX-ACB domain occupies 673 to 763; the sequence is SIYPSSVRDL…LEKEFNARLK (91 aa).

It belongs to the phenylalanyl-tRNA synthetase beta subunit family. Type 1 subfamily. Tetramer of two alpha and two beta subunits. It depends on Mg(2+) as a cofactor.

The protein localises to the cytoplasm. It catalyses the reaction tRNA(Phe) + L-phenylalanine + ATP = L-phenylalanyl-tRNA(Phe) + AMP + diphosphate + H(+). The polypeptide is Phenylalanine--tRNA ligase beta subunit (pheT) (Helicobacter pylori (strain J99 / ATCC 700824) (Campylobacter pylori J99)).